The chain runs to 1419 residues: Collagen alpha-1(II) chain (1419 aa).

A signal peptide spans 1 to 25; that stretch reads MIRLGAPQSLVLLTLLIATVLQCQG. Residues 26-113 constitute a propeptide, N-terminal propeptide; sequence QDARKLGPKG…PGLGGGNFAA (88 aa). A disordered region spans residues 28–1168; the sequence is ARKLGPKGQK…GQREKGPDPL (1141 aa). 2 stretches are compositionally biased toward basic and acidic residues: residues 36–47 and 64–85; these read QKGEPGDIKDII and PRGD…RDGE. The span at 89–104 shows a compositional bias: pro residues; that stretch reads PGNPGPPGPPGPPGPP. K122 is modified (5-hydroxylysine). The O-linked (Gal...) hydroxylysine glycan is linked to K122. Residues 124–135 show a composition bias toward low complexity; that stretch reads GGAQMGVMQGPM. The tract at residues 133-1146 is triple-helical region; the sequence is GPMGPMGPRG…PGPPGPPGPP (1014 aa). Pro residues predominate over residues 140 to 149; the sequence is PRGPPGPAGA. Residues 150-171 show a composition bias toward low complexity; sequence PGPQGFQGNPGEPGEPGVSGPI. Basic and acidic residues predominate over residues 183-197; sequence PGDDGEAGKPGKAGE. 5-hydroxylysine is present on residues K219, K231, and K240. 3 O-linked (Gal...) hydroxylysine glycosylation sites follow: K219, K231, and K240. 2 stretches are compositionally biased toward low complexity: residues 242 to 252 and 267 to 282; these read ESGSPGENGSP and TGPA…DGQP. The segment covering 292-301 has biased composition (gly residues); that stretch reads GPAGGPGFLG. K306 is modified (5-hydroxylysine). Residue K306 is glycosylated (O-linked (Gal...) hydroxylysine). Over residues 335–363 the composition is skewed to low complexity; that stretch reads PAGASGNPGTDGIPGAKGSAGAPGIAGAP. Positions 365-374 are enriched in pro residues; sequence FPGPRGPPGP. Residues 404-417 show a composition bias toward low complexity; it reads ETGPAGPQGAPGPA. 2 positions are modified to 5-hydroxylysine: K540 and K552. K540 and K552 each carry an O-linked (Gal...) hydroxylysine glycan. Positions 554-563 are enriched in low complexity; that stretch reads LAGAPGLRGL. 4-hydroxyproline occurs at positions 591 and 600. The residue at position 602 (P602) is a 3-hydroxyproline; partial. A 4-hydroxyproline mark is found at P603 and P606. Residues 638–668 show a composition bias toward low complexity; it reads ERGSPGAQGLQGPRGLPGTPGTDGPKGAAGP. Residues 696 to 707 are compositionally biased toward basic and acidic residues; it reads KGDRGDVGEKGP. 2 stretches are compositionally biased toward low complexity: residues 765–780 and 809–846; these read AGFA…PGAK and PTGV…NGNP. P839 is subject to 3-hydroxyproline; partial. P840, P846, and P852 each carry 4-hydroxyproline. Over residues 1001 to 1011 the composition is skewed to pro residues; sequence APGPPGSPGPA. Residues 1047 to 1061 are compositionally biased toward basic and acidic residues; the sequence is RGDKGEAGEPGERGL. Position 1076 is a 3-hydroxyproline; partial (P1076). Composition is skewed to low complexity over residues 1080-1089 and 1103-1113; these read SGDQGTSGPA and PSGKDGSNGIP. P1113 is subject to 4-hydroxyproline. Residue P1118 is modified to 3-hydroxyproline. 4-hydroxyproline is present on P1119. The span at 1131–1148 shows a compositional bias: pro residues; it reads AGPPGNPGPPGPPGPPGP. Residue P1133 is modified to 3-hydroxyproline; partial. 2 positions are modified to 4-hydroxyproline: P1134 and P1137. P1139 is modified (3-hydroxyproline; partial). 4-hydroxyproline is present on residues P1140 and P1143. Residue P1145 is modified to 3-hydroxyproline; partial. Position 1146 is a 4-hydroxyproline (P1146). The interval 1147 to 1173 is nonhelical region (C-terminal); the sequence is GPGIDMSAFAGLGQREKGPDPLQYMRA. In terms of domain architecture, Fibrillar collagen NC1 spans 1185–1419; it reads VEVDATLKSL…GVDIGPVCFL (235 aa). 3 disulfides stabilise this stretch: C1215–C1247, C1255–C1417, and C1325–C1370. Residues D1233, N1235, Q1236, C1238, and D1241 each coordinate Ca(2+). The N-linked (GlcNAc...) asparagine glycan is linked to N1320.

Belongs to the fibrillar collagen family. Homotrimers of alpha 1(II) chains. Contains mostly 4-hydroxyproline. Prolines at the third position of the tripeptide repeating unit (G-X-P) are 4-hydroxylated in some or all of the chains. Post-translationally, contains 3-hydroxyproline at a few sites. This modification occurs on the first proline residue in the sequence motif Gly-Pro-Hyp, where Hyp is 4-hydroxyproline. In terms of processing, lysine residues at the third position of the tripeptide repeating unit (G-X-Y) are 5-hydroxylated in some or all of the chains. O-glycosylated on hydroxylated lysine residues. The O-linked glycan consists of a Glc-Gal disaccharide. In terms of tissue distribution, expressed in chondrocytes.

It localises to the secreted. The protein localises to the extracellular space. The protein resides in the extracellular matrix. Type II collagen is specific for cartilaginous tissues. It is essential for the normal embryonic development of the skeleton, for linear growth and for the ability of cartilage to resist compressive forces. This chain is Collagen alpha-1(II) chain, found in Rattus norvegicus (Rat).